The chain runs to 404 residues: Formate-dependent phosphoribosylglycinamide formyltransferase (404 aa).

N(1)-(5-phospho-beta-D-ribosyl)glycinamide contacts are provided by residues 25–26 (EL) and glutamate 85. Residues arginine 118, lysine 159, 164–169 (SSGKGQ), 199–202 (EGFI), and glutamate 207 contribute to the ATP site. The region spanning 123 to 318 (RLAAEELGLP…EFELHARAIL (196 aa)) is the ATP-grasp domain. Mg(2+)-binding residues include glutamate 277 and glutamate 289. N(1)-(5-phospho-beta-D-ribosyl)glycinamide is bound by residues aspartate 296, lysine 365, and 372 to 373 (RR).

The protein belongs to the PurK/PurT family. As to quaternary structure, homodimer.

The enzyme catalyses N(1)-(5-phospho-beta-D-ribosyl)glycinamide + formate + ATP = N(2)-formyl-N(1)-(5-phospho-beta-D-ribosyl)glycinamide + ADP + phosphate + H(+). It functions in the pathway purine metabolism; IMP biosynthesis via de novo pathway; N(2)-formyl-N(1)-(5-phospho-D-ribosyl)glycinamide from N(1)-(5-phospho-D-ribosyl)glycinamide (formate route): step 1/1. Functionally, involved in the de novo purine biosynthesis. Catalyzes the transfer of formate to 5-phospho-ribosyl-glycinamide (GAR), producing 5-phospho-ribosyl-N-formylglycinamide (FGAR). Formate is provided by PurU via hydrolysis of 10-formyl-tetrahydrofolate. The chain is Formate-dependent phosphoribosylglycinamide formyltransferase from Burkholderia mallei (strain NCTC 10247).